The chain runs to 118 residues: Small ribosomal subunit protein uS13 (118 aa).

Positions 91-118 (HRRGLPVRGQRTKTNARTRKGPRKPIKK) are disordered.

This sequence belongs to the universal ribosomal protein uS13 family. In terms of assembly, part of the 30S ribosomal subunit. Forms a loose heterodimer with protein S19. Forms two bridges to the 50S subunit in the 70S ribosome.

In terms of biological role, located at the top of the head of the 30S subunit, it contacts several helices of the 16S rRNA. In the 70S ribosome it contacts the 23S rRNA (bridge B1a) and protein L5 of the 50S subunit (bridge B1b), connecting the 2 subunits; these bridges are implicated in subunit movement. Contacts the tRNAs in the A and P-sites. This chain is Small ribosomal subunit protein uS13, found in Sodalis glossinidius (strain morsitans).